Here is a 250-residue protein sequence, read N- to C-terminus: Ubiquinone/menaquinone biosynthesis C-methyltransferase UbiE (250 aa).

S-adenosyl-L-methionine is bound by residues Ser73, Asp94, and 122 to 123 (NA).

It belongs to the class I-like SAM-binding methyltransferase superfamily. MenG/UbiE family.

The catalysed reaction is a 2-demethylmenaquinol + S-adenosyl-L-methionine = a menaquinol + S-adenosyl-L-homocysteine + H(+). It catalyses the reaction a 2-methoxy-6-(all-trans-polyprenyl)benzene-1,4-diol + S-adenosyl-L-methionine = a 5-methoxy-2-methyl-3-(all-trans-polyprenyl)benzene-1,4-diol + S-adenosyl-L-homocysteine + H(+). It functions in the pathway quinol/quinone metabolism; menaquinone biosynthesis; menaquinol from 1,4-dihydroxy-2-naphthoate: step 2/2. Its pathway is cofactor biosynthesis; ubiquinone biosynthesis. Methyltransferase required for the conversion of demethylmenaquinol (DMKH2) to menaquinol (MKH2) and the conversion of 2-polyprenyl-6-methoxy-1,4-benzoquinol (DDMQH2) to 2-polyprenyl-3-methyl-6-methoxy-1,4-benzoquinol (DMQH2). The chain is Ubiquinone/menaquinone biosynthesis C-methyltransferase UbiE from Legionella pneumophila (strain Lens).